The sequence spans 198 residues: Peptidyl-tRNA hydrolase (198 aa).

Tyr-15 provides a ligand contact to tRNA. His-20 serves as the catalytic Proton acceptor. TRNA-binding residues include Phe-66, Asn-68, and Asn-114.

It belongs to the PTH family. In terms of assembly, monomer.

It localises to the cytoplasm. It carries out the reaction an N-acyl-L-alpha-aminoacyl-tRNA + H2O = an N-acyl-L-amino acid + a tRNA + H(+). Hydrolyzes ribosome-free peptidyl-tRNAs (with 1 or more amino acids incorporated), which drop off the ribosome during protein synthesis, or as a result of ribosome stalling. Functionally, catalyzes the release of premature peptidyl moieties from peptidyl-tRNA molecules trapped in stalled 50S ribosomal subunits, and thus maintains levels of free tRNAs and 50S ribosomes. This is Peptidyl-tRNA hydrolase from Cupriavidus taiwanensis (strain DSM 17343 / BCRC 17206 / CCUG 44338 / CIP 107171 / LMG 19424 / R1) (Ralstonia taiwanensis (strain LMG 19424)).